Reading from the N-terminus, the 81-residue chain is Small ribosomal subunit protein bS18 (81 aa).

Belongs to the bacterial ribosomal protein bS18 family. In terms of assembly, part of the 30S ribosomal subunit. Forms a tight heterodimer with protein bS6.

Functionally, binds as a heterodimer with protein bS6 to the central domain of the 16S rRNA, where it helps stabilize the platform of the 30S subunit. This is Small ribosomal subunit protein bS18 from Rubrobacter xylanophilus (strain DSM 9941 / JCM 11954 / NBRC 16129 / PRD-1).